We begin with the raw amino-acid sequence, 305 residues long: UDP-3-O-acyl-N-acetylglucosamine deacetylase (305 aa).

Residues His78, His237, and Asp241 each contribute to the Zn(2+) site. Catalysis depends on His264, which acts as the Proton donor.

The protein belongs to the LpxC family. Zn(2+) is required as a cofactor.

It catalyses the reaction a UDP-3-O-[(3R)-3-hydroxyacyl]-N-acetyl-alpha-D-glucosamine + H2O = a UDP-3-O-[(3R)-3-hydroxyacyl]-alpha-D-glucosamine + acetate. The protein operates within glycolipid biosynthesis; lipid IV(A) biosynthesis; lipid IV(A) from (3R)-3-hydroxytetradecanoyl-[acyl-carrier-protein] and UDP-N-acetyl-alpha-D-glucosamine: step 2/6. In terms of biological role, catalyzes the hydrolysis of UDP-3-O-myristoyl-N-acetylglucosamine to form UDP-3-O-myristoylglucosamine and acetate, the committed step in lipid A biosynthesis. The chain is UDP-3-O-acyl-N-acetylglucosamine deacetylase from Ralstonia pickettii (strain 12J).